The primary structure comprises 124 residues: MADLKAFAEQLVNLTVKEVNELATILKEEYGIEPAAAAVAVAAGPAAGAAAVEEKTSFDVVLKSAGAAKLQVVKAVKEACGLGLKEAKDMVDGAPSVVKEGLAKDEAESLKKTLEEAGAEVELK.

Belongs to the bacterial ribosomal protein bL12 family. Homodimer. Part of the ribosomal stalk of the 50S ribosomal subunit. Forms a multimeric L10(L12)X complex, where L10 forms an elongated spine to which 2 to 4 L12 dimers bind in a sequential fashion. Binds GTP-bound translation factors.

Forms part of the ribosomal stalk which helps the ribosome interact with GTP-bound translation factors. Is thus essential for accurate translation. This Bacteroides thetaiotaomicron (strain ATCC 29148 / DSM 2079 / JCM 5827 / CCUG 10774 / NCTC 10582 / VPI-5482 / E50) protein is Large ribosomal subunit protein bL12.